The sequence spans 324 residues: Putative ribose-phosphate pyrophosphokinase 2 (324 aa).

Residues 43 to 45 and 102 to 103 contribute to the ATP site; these read DGE and RQ. Position 136 (histidine 136) interacts with Mg(2+). D-ribose 5-phosphate-binding positions include aspartate 225 and 229 to 233; that span reads NTGKT.

It belongs to the ribose-phosphate pyrophosphokinase family. Class I subfamily. As to quaternary structure, homohexamer. Mg(2+) is required as a cofactor.

The protein resides in the cytoplasm. The catalysed reaction is D-ribose 5-phosphate + ATP = 5-phospho-alpha-D-ribose 1-diphosphate + AMP + H(+). It functions in the pathway metabolic intermediate biosynthesis; 5-phospho-alpha-D-ribose 1-diphosphate biosynthesis; 5-phospho-alpha-D-ribose 1-diphosphate from D-ribose 5-phosphate (route I): step 1/1. In terms of biological role, involved in the biosynthesis of the central metabolite phospho-alpha-D-ribosyl-1-pyrophosphate (PRPP) via the transfer of pyrophosphoryl group from ATP to 1-hydroxyl of ribose-5-phosphate (Rib-5-P). The chain is Putative ribose-phosphate pyrophosphokinase 2 from Streptococcus agalactiae serotype III (strain NEM316).